Reading from the N-terminus, the 251-residue chain is L-ascorbate peroxidase 2, cytosolic (251 aa).

His-43 serves as the catalytic Proton acceptor. Positions 113–137 are disordered; sequence EVPFHPGRQDKPEPPPEGRLPDATQ. The segment covering 119–132 has biased composition (basic and acidic residues); sequence GRQDKPEPPPEGRL. His-164 provides a ligand contact to heme b. K(+) is bound by residues Thr-165, Thr-181, Asn-183, Ile-186, and Asp-188.

Belongs to the peroxidase family. Ascorbate peroxidase subfamily. It depends on heme b as a cofactor. As to expression, expressed in aerial vegetative parts and reproductive organs. Expressed in roots, leaves, stems and flowers. Expressed in young leaves, internodes, blade ears, stems and anthers.

It is found in the cytoplasm. It catalyses the reaction L-ascorbate + H2O2 = L-dehydroascorbate + 2 H2O. With respect to regulation, inhibited by p-chloromercuriphenylsulfonic acid (CMPSA). Its function is as follows. Plays a key role in hydrogen peroxide removal. Plays an important role in plant growth and development by protecting the seedlings from abiotic stresses through scavenging reactive oxygen species. Required for pollen viability. This is L-ascorbate peroxidase 2, cytosolic from Oryza sativa subsp. japonica (Rice).